The primary structure comprises 214 residues: Small ribosomal subunit protein uS3 (214 aa).

One can recognise a KH type-2 domain in the interval 39-107 (IRAYLLKKPA…EVWVAVEEVK (69 aa)).

Belongs to the universal ribosomal protein uS3 family. In terms of assembly, part of the 30S ribosomal subunit. Forms a tight complex with proteins S10 and S14.

Its function is as follows. Binds the lower part of the 30S subunit head. Binds mRNA in the 70S ribosome, positioning it for translation. This chain is Small ribosomal subunit protein uS3, found in Protochlamydia amoebophila (strain UWE25).